We begin with the raw amino-acid sequence, 605 residues long: Alpha-1,3-galactosidase A (605 aa).

The first 20 residues, 1-20 (MKKYLHILPACFLFYAAAHA), serve as a signal peptide directing secretion. 6 PbH1 repeats span residues 256–278 (SKNI…VSQY), 312–334 (KGKV…NVHG), 421–443 (TPEV…LVTT), 444–466 (PRKV…LIEA), 477–507 (VKDV…HPSN), and 517–547 (HQNI…LFRN).

Belongs to the glycosyl hydrolase 110 family. A subfamily.

It carries out the reaction Hydrolysis of terminal, non-reducing branched (1-&gt;3)-alpha-D-galactosidic residues, producing free D-galactose.. The catalysed reaction is Hydrolysis of terminal, non-reducing alpha-D-galactose residues in alpha-D-galactosides, including galactose oligosaccharides, galactomannans and galactolipids.. Functionally, alpha-galactosidase that specifically removes branched alpha-1,3-linked galactose residues present in blood group B antigens. Has no activity toward linear alpha-1,3-linked galactose residues. The sequence is that of Alpha-1,3-galactosidase A (glaA) from Bacteroides fragilis (strain YCH46).